Consider the following 238-residue polypeptide: Ribonuclease PH (238 aa).

Phosphate is bound by residues R86 and 124-126 (GTR).

This sequence belongs to the RNase PH family. Homohexameric ring arranged as a trimer of dimers.

The catalysed reaction is tRNA(n+1) + phosphate = tRNA(n) + a ribonucleoside 5'-diphosphate. Phosphorolytic 3'-5' exoribonuclease that plays an important role in tRNA 3'-end maturation. Removes nucleotide residues following the 3'-CCA terminus of tRNAs; can also add nucleotides to the ends of RNA molecules by using nucleoside diphosphates as substrates, but this may not be physiologically important. Probably plays a role in initiation of 16S rRNA degradation (leading to ribosome degradation) during starvation. This Acinetobacter baumannii (strain AB307-0294) protein is Ribonuclease PH.